Reading from the N-terminus, the 4650-residue chain is Nonribosomal peptide synthetase lenA (4650 aa).

The tract at residues 227–628 (GSILDTIRAK…DGSVIHVGRK (402 aa)) is adenylation 1. In terms of domain architecture, Carrier 1 spans 773–849 (PPETVLEKAL…KLAQYLRNTE (77 aa)). An O-(pantetheine 4'-phosphoryl)serine modification is found at S810. The condensation 1 stretch occupies residues 890–1212 (EDCYPCTALQ…CDFQSQLIFQ (323 aa)). The adenylation 2 stretch occupies residues 1288–1622 (ELELNAQKEP…RKIRPGYLGR (335 aa)). In terms of domain architecture, Carrier 2 spans 1745–1822 (PPVSAAEKKW…EIAALSETRD (78 aa)). O-(pantetheine 4'-phosphoryl)serine is present on S1782. The condensation 2 stretch occupies residues 1850–2110 (ATNLIAATVH…GEKTRPGGGA (261 aa)). Positions 2183 to 2511 (RCVHDLVHDA…RTGDLIKLRG (329 aa)) are adenylation 3. Residues 2630 to 2708 (APQNRLQHDI…EADVGLDHAS (79 aa)) enclose the Carrier 3 domain. The residue at position 2667 (S2667) is an O-(pantetheine 4'-phosphoryl)serine. Residues 2722-2998 (ESMARALAVI…KDARRRSPAN (277 aa)) are epimerase. Residues 3128–3565 (VQDVYPCTPI…VDDSQRQQIL (438 aa)) are condensation 3. Residues 3578–3980 (CVHHIIHQRC…FVGRKDNQIK (403 aa)) are adenylation 4. The region spanning 4114–4190 (TPSTPLEAQL…QLAAVLEEGA (77 aa)) is the Carrier 4 domain. S4151 carries the O-(pantetheine 4'-phosphoryl)serine modification. Residues 4249–4648 (HMVLTFSQPV…TTTPEKLVAE (400 aa)) are condensation 4.

It belongs to the NRP synthetase family. Pantetheine 4'-phosphate is required as a cofactor.

It functions in the pathway alkaloid biosynthesis. In terms of biological role, nonribosomal peptide synthetase; part of the gene cluster that mediates the biosynthesis of the ergot alkaloids lentopeptins A and B. Within the pathway, lenA catalyzes the biosynthesis of the Ala-Val-Ala peptide chain, including a cinnamic acid moiety as the starting unit. The release of the peptide from the enzyme is accomplished via a cyclization reaction catalyzed by the terminal condensation-like (Ct) domain of lenA to form the N-acyldiketopiperazine intermediate. The reaction appears to proceed through a nucleophilic attack on the carbonyl carbon by a lone electron pair of the valine amide nitrogen. The phenylalanine ammonia-lyase lenB provides the starter unit for the synthesis of the N-acyldiketopiperazine intermediate by the NRPS lenA, while the cytochrome P450 monooxygenase lenC is involved in the post-NRPS oxidative modification steps to form lentopeptins A and B. The polypeptide is Nonribosomal peptide synthetase lenA (Aspergillus lentulus).